Consider the following 276-residue polypeptide: Large ribosomal subunit protein uL2 (276 aa).

Disordered stretches follow at residues 14-58 and 219-276; these read RNAS…GGGH and PITR…KNRK. Polar residues predominate over residues 16–27; sequence ASVSDFSELTRS. The segment covering 255 to 276 has biased composition (basic residues); sequence RRPKKASNKMIVRRRPSGKNRK.

Belongs to the universal ribosomal protein uL2 family. Part of the 50S ribosomal subunit. Forms a bridge to the 30S subunit in the 70S ribosome.

Its function is as follows. One of the primary rRNA binding proteins. Required for association of the 30S and 50S subunits to form the 70S ribosome, for tRNA binding and peptide bond formation. It has been suggested to have peptidyltransferase activity; this is somewhat controversial. Makes several contacts with the 16S rRNA in the 70S ribosome. This chain is Large ribosomal subunit protein uL2, found in Bifidobacterium longum (strain DJO10A).